The primary structure comprises 98 residues: uncharacterized protein (98 aa).

This sequence belongs to the IS150/IS1296 orfA family.

This is an uncharacterized protein from Haemophilus influenzae (strain ATCC 51907 / DSM 11121 / KW20 / Rd).